The chain runs to 319 residues: MEPSKANEDFLIAKAHAKINLHLEVLGIRSDGFHELAMVMQSINLSDQLKMIKRVDNTINLKSNNKEISNGDDNLIIKASKLLRNKVENQELGVDIELEKNIPIGAGLAGGSTDAAATLLGLNKLWKLNLKTDELENLSKEIGSDIPFCISGGRQICFGRGEILEKLKFDQIQLGLILVKDPSIQVSTPVAYKKYKDQFGESYLEDDRDFEIKRNSIRSIDWSDQSLFDNRKEIQNDLQKSVRPITPEVEKSLDLLSSLPDSRLVSMSGSGPSCFALFQNYDQANKVLKEHVNEFERAGLSAWACSMMSNGVELRNEFI.

Residue Lys-18 is part of the active site. 103–113 (PIGAGLAGGST) contacts ATP. Asp-145 is an active-site residue.

The protein belongs to the GHMP kinase family. IspE subfamily.

It carries out the reaction 4-CDP-2-C-methyl-D-erythritol + ATP = 4-CDP-2-C-methyl-D-erythritol 2-phosphate + ADP + H(+). It functions in the pathway isoprenoid biosynthesis; isopentenyl diphosphate biosynthesis via DXP pathway; isopentenyl diphosphate from 1-deoxy-D-xylulose 5-phosphate: step 3/6. In terms of biological role, catalyzes the phosphorylation of the position 2 hydroxy group of 4-diphosphocytidyl-2C-methyl-D-erythritol. This Prochlorococcus marinus (strain NATL1A) protein is 4-diphosphocytidyl-2-C-methyl-D-erythritol kinase.